The chain runs to 275 residues: Serine/threonine-protein phosphatase PGAM5, mitochondrial (275 aa).

The chain crosses the membrane as a helical span at residues Leu7–Gly24.

Belongs to the phosphoglycerate mutase family. BPG-dependent PGAM subfamily. Phosphorylated by the RIPK1/RIPK3 complex under necrotic conditions. This phosphorylation increases PGAM5 phosphatase activity.

The protein localises to the mitochondrion outer membrane. It carries out the reaction O-phospho-L-seryl-[protein] + H2O = L-seryl-[protein] + phosphate. The catalysed reaction is O-phospho-L-threonyl-[protein] + H2O = L-threonyl-[protein] + phosphate. Functionally, displays phosphatase activity for serine/threonine residues. Has apparently no phosphoglycerate mutase activity. May be regulator of mitochondrial dynamics. May be a central mediator for programmed necrosis. In Xenopus laevis (African clawed frog), this protein is Serine/threonine-protein phosphatase PGAM5, mitochondrial (pgam5).